A 216-amino-acid chain; its full sequence is Transmembrane protein 163a (216 aa).

Over 1-15 the chain is Cytoplasmic; the sequence is MRLKPHEAQSYRKKA. Residues 16–36 traverse the membrane as a helical segment; sequence LWVSWISIVVTLILAVAGFTV. Residues 37–43 lie on the Extracellular side of the membrane; sequence SFMRHSA. The helical transmembrane segment at 44-64 threads the bilayer; that stretch reads SAFGFAFDATLDVLSSIIVLW. Topologically, residues 65-77 are cytoplasmic; sequence RYSNAAAVHSAHR. A helical transmembrane segment spans residues 78–98; it reads EYIACVILGVIFILSSLCILG. At 99–114 the chain is on the extracellular side; that stretch reads KAIHDLATKLLPEVDD. A helical membrane pass occupies residues 115–135; sequence FLFSVSIVSGLMCVILAVAKF. The Cytoplasmic segment spans residues 136–144; sequence MLGRILTSR. Residues 145 to 165 form a helical membrane-spanning segment; that stretch reads ALITDGFNSMVGGIMGFSILI. The Extracellular segment spans residues 166 to 182; the sequence is SAEVFRHYPNVWYLDGT. A helical transmembrane segment spans residues 183–203; that stretch reads IGILIGLVIQAYGVKLLVDMI. Residues 204-216 lie on the Cytoplasmic side of the membrane; it reads PRVRQTRNYERFE.

It belongs to the TMEM163 family.

Its subcellular location is the cytoplasmic vesicle. It is found in the secretory vesicle. The protein localises to the synaptic vesicle membrane. The protein resides in the early endosome membrane. It localises to the late endosome membrane. Its subcellular location is the lysosome membrane. It is found in the cell membrane. It catalyses the reaction Zn(2+)(in) = Zn(2+)(out). Zinc ion transporter that mediates zinc efflux and plays a crucial role in intracellular zinc homeostasis. Binds the divalent cations Zn(2+), Ni(2+), and to a minor extent Cu(2+). Is a functional modulator of P2X purinoceptors, including P2RX1, P2RX3, P2RX4 and P2RX7. Plays a role in central nervous system development and is required for myelination, and survival and proliferation of oligodendrocytes. This Danio rerio (Zebrafish) protein is Transmembrane protein 163a.